The sequence spans 261 residues: Hydroxyethylthiazole kinase (261 aa).

Residue methionine 38 coordinates substrate. ATP is bound by residues arginine 114 and threonine 159. Residue glycine 186 participates in substrate binding.

The protein belongs to the Thz kinase family. It depends on Mg(2+) as a cofactor.

It carries out the reaction 5-(2-hydroxyethyl)-4-methylthiazole + ATP = 4-methyl-5-(2-phosphooxyethyl)-thiazole + ADP + H(+). The protein operates within cofactor biosynthesis; thiamine diphosphate biosynthesis; 4-methyl-5-(2-phosphoethyl)-thiazole from 5-(2-hydroxyethyl)-4-methylthiazole: step 1/1. Its function is as follows. Catalyzes the phosphorylation of the hydroxyl group of 4-methyl-5-beta-hydroxyethylthiazole (THZ). The polypeptide is Hydroxyethylthiazole kinase (Halalkalibacterium halodurans (strain ATCC BAA-125 / DSM 18197 / FERM 7344 / JCM 9153 / C-125) (Bacillus halodurans)).